Consider the following 265-residue polypeptide: Energy-coupling factor transporter transmembrane protein EcfT (265 aa).

Transmembrane regions (helical) follow at residues 26-46 (MVFV…QTYA), 47-67 (VGII…MFLF), 72-92 (PILF…KGGA), 107-127 (VIMG…TTIM), 152-172 (LPVH…PTLM), and 243-263 (HTYD…ILYL).

It belongs to the energy-coupling factor EcfT family. In terms of assembly, forms a stable energy-coupling factor (ECF) transporter complex composed of 2 membrane-embedded substrate-binding proteins (S component), 2 ATP-binding proteins (A component) and 2 transmembrane proteins (T component). May be able to interact with more than 1 S component at a time.

The protein localises to the cell membrane. In terms of biological role, transmembrane (T) component of an energy-coupling factor (ECF) ABC-transporter complex. Unlike classic ABC transporters this ECF transporter provides the energy necessary to transport a number of different substrates. This Macrococcus caseolyticus (strain JCSC5402) (Macrococcoides caseolyticum) protein is Energy-coupling factor transporter transmembrane protein EcfT.